A 130-amino-acid chain; its full sequence is Small ribosomal subunit protein bS16 (130 aa).

Basic and acidic residues predominate over residues 98-109; sequence AAAKQAAKDAAE. Positions 98–130 are disordered; it reads AAAKQAAKDAAEAKAAAAAEAEAPAADAEASEG. The span at 110 to 130 shows a compositional bias: low complexity; that stretch reads AKAAAAAEAEAPAADAEASEG.

The protein belongs to the bacterial ribosomal protein bS16 family.

In Synechococcus sp. (strain CC9902), this protein is Small ribosomal subunit protein bS16.